The chain runs to 352 residues: Mitochondrial hydrolase YKR070W (352 aa).

This sequence belongs to the HAD-like hydrolase superfamily.

The protein localises to the mitochondrion. This chain is Mitochondrial hydrolase YKR070W, found in Saccharomyces cerevisiae (strain ATCC 204508 / S288c) (Baker's yeast).